The primary structure comprises 106 residues: Small ribosomal subunit protein bS18 (106 aa).

A disordered region spans residues 1-39 (MNGRNNDMGRNGGADYDDRDFGRTPDLNADAPGRRRTGR).

Belongs to the bacterial ribosomal protein bS18 family. In terms of assembly, part of the 30S ribosomal subunit. Forms a tight heterodimer with protein bS6.

Functionally, binds as a heterodimer with protein bS6 to the central domain of the 16S rRNA, where it helps stabilize the platform of the 30S subunit. The chain is Small ribosomal subunit protein bS18 from Sorangium cellulosum (strain So ce56) (Polyangium cellulosum (strain So ce56)).